Consider the following 94-residue polypeptide: Protein S100-A1 (94 aa).

EF-hand domains lie at 13–48 and 50–85; these read INVF…FLDV and KDAD…LTVA. Lys-28, Glu-33, Asp-63, Asn-65, Asp-67, Glu-69, and Glu-74 together coordinate Ca(2+). At Cys-86 the chain carries S-nitrosocysteine.

The protein belongs to the S-100 family. Dimer of either two alpha chains, or two beta chains, or one alpha and one beta chain. Also forms heterodimers with S100P. Interacts with AGER. Interacts with CAPZA1. Interacts with FKBP4. Interacts with RYR1 and RYR2. Interacts with CACYBP in a calcium-dependent manner. Interacts with PPP5C (via TPR repeats); the interaction is calcium-dependent and modulates PPP5C activity. Interacts with ATP2A2 and PLN in a Ca(2+)-dependent manner. Interacts with mitochondrial F1-ATPase subunits ATP5F1A and ATP5F1B; these interactions increase F1-ATPase activity. Post-translationally, glutathionylated; glutathionylation increases affinity to calcium about 10-fold. In terms of tissue distribution, although predominant among the water-soluble brain proteins, S100 is also found in a variety of other tissues.

It localises to the cytoplasm. It is found in the sarcoplasmic reticulum. The protein localises to the mitochondrion. Small calcium binding protein that plays important roles in several biological processes such as Ca(2+) homeostasis, chondrocyte biology and cardiomyocyte regulation. In response to an increase in intracellular Ca(2+) levels, binds calcium which triggers conformational changes. These changes allow interactions with specific target proteins and modulate their activity. Regulates a network in cardiomyocytes controlling sarcoplasmic reticulum Ca(2+) cycling and mitochondrial function through interaction with the ryanodine receptors RYR1 and RYR2, sarcoplasmic reticulum Ca(2+)-ATPase/ATP2A2 and mitochondrial F1-ATPase. Facilitates diastolic Ca(2+) dissociation and myofilament mechanics in order to improve relaxation during diastole. The chain is Protein S100-A1 (S100a1) from Rattus norvegicus (Rat).